Consider the following 216-residue polypeptide: Probable GTP-binding protein EngB (216 aa).

The 175-residue stretch at 27–201 (EGIEVAFAGR…SQKLNTWFNE (175 aa)) folds into the EngB-type G domain. GTP-binding positions include 35 to 42 (GRSNAGKS), 62 to 66 (GRTQL), 80 to 83 (DLPG), 147 to 150 (TKAD), and 180 to 182 (FSS). Mg(2+)-binding residues include Ser42 and Thr64.

The protein belongs to the TRAFAC class TrmE-Era-EngA-EngB-Septin-like GTPase superfamily. EngB GTPase family. The cofactor is Mg(2+).

Its function is as follows. Necessary for normal cell division and for the maintenance of normal septation. The chain is Probable GTP-binding protein EngB from Serratia proteamaculans (strain 568).